The chain runs to 217 residues: MSLRSLFVAGLATLALAAPAPQIQARQGMSSNELESGPCRDVTFIFARGSTEQGNMGFIVGPGVCSSLKNDLGSDKVACQGVGGAYTAQLAPNFLSQNTDQASIDAATDMFDLANTKCPNTKIVAGGYSQGSAVIDNAIQALDSDLKAKVKGVVLFGFTRNVVDKGQIPGYPKDQTKIYCALGDLVCDNTLIITAAHLSYGADADDAAKFLASKVQG.

An N-terminal signal peptide occupies residues 1–17 (MSLRSLFVAGLATLALA). Cystine bridges form between C39/C118 and C65/C79. The Nucleophile role is filled by S129. A disulfide bridge links C180 with C187. D184 is an active-site residue. The active-site Proton donor/acceptor is the H197.

It belongs to the cutinase family.

The protein resides in the secreted. The enzyme catalyses cutin + H2O = cutin monomers.. Catalyzes the hydrolysis of complex carboxylic polyesters found in the cell wall of plants. Degrades cutin, a macromolecule that forms the structure of the plant cuticle. This chain is Probable cutinase 3, found in Neosartorya fischeri (strain ATCC 1020 / DSM 3700 / CBS 544.65 / FGSC A1164 / JCM 1740 / NRRL 181 / WB 181) (Aspergillus fischerianus).